A 610-amino-acid chain; its full sequence is Menin (610 aa).

Residues 214–390 form an interaction with FANCD2 region; it reads GVAERSWLYL…SLLEAGEERP (177 aa). The segment at 462–552 is disordered; that stretch reads AEAAEAEELW…SPPPEGPVLT (91 aa). The segment covering 484–500 has biased composition (basic and acidic residues); it reads RRESKPEEPPPPKKPAL. A phosphoserine mark is found at Ser487 and Ser543. The segment covering 537-548 has biased composition (pro residues); that stretch reads APAPAASPPPEG. At Thr594 the chain carries Phosphothreonine.

As to quaternary structure, component of the MLL-HCF complex, at least composed of KMT2A/MLL1, MEN1, ASH2L, RBBP5, DPY30, WDR5, HCFC1 and HCFC2. Component of the menin-associated histone methyltransferase complex, at least composed of KMT2B/MLL4, MEN1, ASH2L, RBBP5, DPY30 and WDR5. Interacts with POLR2B. Interacts with POLR2A phosphorylated at 'Ser-5', but not with the unphosphorylated, nor 'Ser-2' phosphorylated POLR2A forms. Interacts with FANCD2 and DBF4. Interacts with SMAD3, but not with SMAD2, nor SMAD4. Directly interacts with NFKB1, NFKB2 and RELA. Interacts with JUND (via MBM motif); inhibits the interaction of JUND with MAPK10 and the phosphorylation of JUND by MAP kinases MAPK8 and MAPK10. Interacts with KMT2A (via MBM motif). The KMT2A-MEN1 complex interacts with PSIP1 with a greater affinity as MEN1 enhances interaction of KMT2A with PSIP1.

It is found in the nucleus. In terms of biological role, essential component of a MLL/SET1 histone methyltransferase (HMT) complex, a complex that specifically methylates 'Lys-4' of histone H3 (H3K4). Functions as a transcriptional regulator. Binds to the TERT promoter and represses telomerase expression. Plays a role in TGFB1-mediated inhibition of cell-proliferation, possibly regulating SMAD3 transcriptional activity. Represses JUND-mediated transcriptional activation on AP1 sites, as well as that mediated by NFKB subunit RELA. Positively regulates HOXC8 and HOXC6 gene expression. May be involved in normal hematopoiesis through the activation of HOXA9 expression. May be involved in DNA repair. This chain is Menin (MEN1), found in Canis lupus familiaris (Dog).